The sequence spans 523 residues: 2-isopropylmalate synthase (523 aa).

The Pyruvate carboxyltransferase domain occupies 5-267 (VIIFDTTLRD…HTRINHQEIW (263 aa)). 4 residues coordinate Mn(2+): D14, H202, H204, and N238. The regulatory domain stretch occupies residues 392–523 (RLEYFSVQSG…QNKEHNQETV (132 aa)).

This sequence belongs to the alpha-IPM synthase/homocitrate synthase family. LeuA type 1 subfamily. Homodimer. Mn(2+) is required as a cofactor.

The protein localises to the cytoplasm. It catalyses the reaction 3-methyl-2-oxobutanoate + acetyl-CoA + H2O = (2S)-2-isopropylmalate + CoA + H(+). It participates in amino-acid biosynthesis; L-leucine biosynthesis; L-leucine from 3-methyl-2-oxobutanoate: step 1/4. Catalyzes the condensation of the acetyl group of acetyl-CoA with 3-methyl-2-oxobutanoate (2-ketoisovalerate) to form 3-carboxy-3-hydroxy-4-methylpentanoate (2-isopropylmalate). The sequence is that of 2-isopropylmalate synthase from Cronobacter sakazakii (strain ATCC BAA-894) (Enterobacter sakazakii).